Here is a 653-residue protein sequence, read N- to C-terminus: Transcription factor Ken 1 (653 aa).

A BTB domain is found at 35–103; that stretch reads TDLLLICDGK…LYSGQVYVRS (69 aa). Disordered regions lie at residues 126–215, 234–305, 429–451, and 512–534; these read NSDG…DRDR, NNHP…SDDA, LSNNNNSSSNNNNNNNRIRPPSA, and ELSARASAAGGGGGGSGGNGSGS. Polar residues predominate over residues 145 to 157; sequence NRNTEGITGSSVV. The segment covering 251–272 has biased composition (basic residues); it reads GHHHHHHHHHHHRQLHQIKTRS. Polar residues predominate over residues 286-299; the sequence is SDPVNLSIVKQQQD. A compositionally biased stretch (low complexity) spans 430–444; it reads SNNNNSSSNNNNNNN. Positions 520–534 are enriched in gly residues; sequence AGGGGGGSGGNGSGS. 3 C2H2-type zinc fingers span residues 555-577, 583-606, and 619-641; these read YRCEYCGKTFGMSWNLKTHLRVH, FACRLCVAMFKQKAHLLKHLCSVH, and YTCCFCSLVFETLQELVRHLSGH.

Its subcellular location is the nucleus. Its function is as follows. Transcription factor required for terminalia development. Negative regulator of the JAK/STAT pathway: represses JAK/STAT-dependent expression of ventral veins lacking (vvl) in the posterior spiracles. The chain is Transcription factor Ken 1 from Culex quinquefasciatus (Southern house mosquito).